A 213-amino-acid chain; its full sequence is Uridine kinase (213 aa).

An ATP-binding site is contributed by 14–21 (GASASGKS).

The protein belongs to the uridine kinase family.

It localises to the cytoplasm. It carries out the reaction uridine + ATP = UMP + ADP + H(+). It catalyses the reaction cytidine + ATP = CMP + ADP + H(+). It functions in the pathway pyrimidine metabolism; CTP biosynthesis via salvage pathway; CTP from cytidine: step 1/3. The protein operates within pyrimidine metabolism; UMP biosynthesis via salvage pathway; UMP from uridine: step 1/1. This Vibrio cholerae serotype O1 (strain ATCC 39315 / El Tor Inaba N16961) protein is Uridine kinase.